Consider the following 328-residue polypeptide: GTP 3',8-cyclase (328 aa).

Residues 1–229 (MNTVDYLRIS…ESFVPGNGPA (229 aa)) enclose the Radical SAM core domain. Arg-8 provides a ligand contact to GTP. Cys-15 and Cys-19 together coordinate [4Fe-4S] cluster. Tyr-21 contacts S-adenosyl-L-methionine. Residue Cys-22 coordinates [4Fe-4S] cluster. Arg-60 is a binding site for GTP. Position 64 (Gly-64) interacts with S-adenosyl-L-methionine. Thr-91 serves as a coordination point for GTP. Residue Ser-115 coordinates S-adenosyl-L-methionine. Lys-155 serves as a coordination point for GTP. Residue Met-189 participates in S-adenosyl-L-methionine binding. Positions 252 and 255 each coordinate [4Fe-4S] cluster. 257–259 (RMR) lines the GTP pocket. Cys-269 is a binding site for [4Fe-4S] cluster.

Belongs to the radical SAM superfamily. MoaA family. In terms of assembly, monomer and homodimer. [4Fe-4S] cluster serves as cofactor.

It catalyses the reaction GTP + AH2 + S-adenosyl-L-methionine = (8S)-3',8-cyclo-7,8-dihydroguanosine 5'-triphosphate + 5'-deoxyadenosine + L-methionine + A + H(+). Its pathway is cofactor biosynthesis; molybdopterin biosynthesis. In terms of biological role, catalyzes the cyclization of GTP to (8S)-3',8-cyclo-7,8-dihydroguanosine 5'-triphosphate. In Trichodesmium erythraeum (strain IMS101), this protein is GTP 3',8-cyclase.